The chain runs to 656 residues: Phosphoprotein 85 (656 aa).

2 disordered regions span residues 1 to 174 (MSSR…EGDE) and 615 to 656 (NGNH…EYCC). Residues 46 to 55 (SATEDLDRME) are compositionally biased toward basic and acidic residues. 2 stretches are compositionally biased toward low complexity: residues 59–70 (SPYSVSSDAPSS) and 140–160 (DNSSSGGSSSRTTSNSSRSTS). Residues 625–634 (SPPPPLPPRD) show a composition bias toward pro residues. The segment covering 635 to 656 (YPQRDERDRHRRDRRDSGEYCC) has biased composition (basic and acidic residues).

The protein belongs to the herpesviridae pp85 family. Post-translationally, phosphorylated.

It is found in the virion tegument. The protein resides in the host cytoplasm. This Homo sapiens (Human) protein is Phosphoprotein 85 (UL25).